Here is a 219-residue protein sequence, read N- to C-terminus: Transmembrane emp24 domain-containing protein 10 (219 aa).

An N-terminal signal peptide occupies residues 1 to 31; it reads MSGLSGPPARRGPFPLALLLLFLLGPRLVLA. A required for interaction with STX17 region spans residues 1–142; sequence MSGLSGPPAR…KNYEEIAKVE (142 aa). Residues 32–185 are Lumenal-facing; sequence ISFHLPINSR…RDTNESTNTR (154 aa). Residues 41-193 form the GOLD domain; the sequence is RKCLREEIHK…TRVLYFSIFS (153 aa). The interval 147-178 is required for TMED10 and TMED2 cis-Golgi network localization; sequence LEVELRRLEDLSESIVNDFAYMKKREEEMRDT. A dimethylated arginine mark is found at Arg171 and Arg176. N-linked (GlcNAc...) asparagine glycosylation occurs at Asn179. A helical membrane pass occupies residues 186–206; the sequence is VLYFSIFSMFCLIGLATWQVF. The tract at residues 204-219 is interaction with COPG1; the sequence is QVFYLRRFFKAKKLIE. The Cytoplasmic portion of the chain corresponds to 207–219; sequence YLRRFFKAKKLIE. An interaction with ARF1 and IL1B region spans residues 207–219; it reads YLRRFFKAKKLIE. The COPII vesicle coat-binding signature appears at 211 to 212; it reads FF. The COPI vesicle coat-binding signature appears at 211–219; it reads FFKAKKLIE.

It belongs to the EMP24/GP25L family. In terms of assembly, predominantly dimeric and to a lesser extent monomeric in the ER. Monomer and dimer in ERGIC and cis-Golgi network. Forms homooligomer (via GOLD domain); the assembly is promoted by direct binding with leaderless cargos and may form a protein channel that facilitates cargo entry into the ERGIC. Forms heterooligomeric complexes with other members of the p24 family such as TMED2, TMED7 and TMED9. Interacts (via GOLD domain) with TMED2 (via GOLD domain); the complex is required for export of TMED10 from the ER to the cis-Golgi network; the complex is proposed to be involved in cis-Golgi network dynamics and / or biogenesis. Associates with the COPI vesicle coat subunits (coatomer). Tetramerization of the cytoplasmic domain at the Golgi membrane in vitro; the complex is proposed to interact with COPI coatomer and induce budding of the vesicles. Interacts with COPG1; the interaction involves TMED10 homodimer. Interacts with ARF1 (GDP-bound); the interaction probably involves a TMED10 oligomer. Interacts with SEC23A, SEC24B, SEC24C and SEC24D components of the coat protein complex II/COPII, indicative of an association of TMED10 with the COPII vesicle coat. Interacts with CD59. Interacts with MPPE1/PGAP5; the complex might recruit and sort GPI-anchored proteins to the ER-exit site, or the interaction might lead to recycling of PGAP5 between the ER and the Golgi. Interacts with F2LR1/PAR2. Interacts with KDELR2/ERD2; the interaction is disrupted by KDELR2 ligand. Found in a complex composed at least of SURF4, TMED2 and TMED10. Associates with the presenilin-dependent gamma-secretase complex. Interacts with STX17; the interaction is direct. Interacts with IL-1; the interaction is direct. Interacts with RAB21 (active GTP-bound form); the interaction is indirect and regulates TMED10 abundance and localization at the Golgi.

Its subcellular location is the endoplasmic reticulum membrane. The protein localises to the endoplasmic reticulum-Golgi intermediate compartment membrane. It localises to the golgi apparatus membrane. The protein resides in the golgi apparatus. It is found in the cis-Golgi network membrane. Its subcellular location is the trans-Golgi network membrane. The protein localises to the cytoplasmic vesicle. It localises to the secretory vesicle membrane. The protein resides in the cell membrane. It is found in the melanosome. Cargo receptor involved in protein vesicular trafficking and quality control in the endoplasmic reticulum (ER) and Golgi. The p24 protein family is a group of transmembrane proteins that bind coat protein complex I/COPI and coat protein complex II/COPII involved in vesicular trafficking between the membranes. Acts at the lumenal side for incorporation of secretory cargo molecules into transport vesicles and involved in vesicle coat formation at the cytoplasmic side. Mainly functions in the early secretory pathway and cycles between the ER, ER-Golgi intermediate compartment (ERGIC) and Golgi, mediating cargo transport through COPI and COPII-coated vesicles. In COPII vesicle-mediated anterograde transport, involved in the transport of GPI-anchored proteins by acting together with TMED2 as their cargo receptor; the function specifically implies SEC24C and SEC24D of the COPII vesicle coat and lipid raft-like microdomains of the ER. Recognizes GPI anchors structural remodeled in the ER by the GPI inositol-deacylase/PGAP1 and the metallophosphoesterase MPPE1/PGAP5. In COPI vesicle-mediated retrograde transport, involved in the biogenesis of COPI vesicles and vesicle coat recruitment. Involved in trafficking of amyloid beta A4 protein and soluble APP-beta release (independent from the modulation of gamma-secretase activity). Involved in the KDELR2-mediated retrograde transport of the toxin A subunit (CTX-A-K63)together with COPI and the COOH terminus of KDELR2. On Golgi membranes, acts as a primary receptor for ARF1-GDP, a GTP-binding protein involved in COPI-vesicle formation. Increases coatomer-dependent GTPase-activating activity of ARFGAP2 which mediates the hydrolysis of ARF1-bound GTP and therefore modulates protein trafficking from the Golgi apparatus. Involved in the exocytic trafficking of G protein-coupled receptors F2LR1/PAR2 (trypsin and tryspin-like enzyme receptor), OPRM1 (opioid receptor) and P2RY4 (UTD and UDP receptor) from the Golgi to the plasma membrane, thus contributing to receptor resensitization. In addition to its cargo receptor activity, may also act as a protein channel after oligomerization, facilitating the post-translational entry of leaderless cytoplasmic cargo into the ERGIC. Involved in the translocation into ERGIC, the vesicle entry and the secretion of leaderless cargos (lacking the secretion signal sequence), including the mature form of interleukin 1/IL-1 family members, the alpha-crystallin B chain HSPB5, the carbohydrate-binding proteins galectin-1/LGALS1 and galectin-3/LGALS3, the microtubule-associated protein Tau/MAPT, and the annexin A1/ANXA1; the translocation process is dependent on cargo protein unfolding and enhanced by chaperones HSP90AB1 and HSP90B1/GRP9. Could also associates with the presenilin-dependent gamma-secretase complex in order to regulate gamma-cleavages of the amyloid beta A4 protein to yield amyloid-beta 40/Abeta40. This is Transmembrane emp24 domain-containing protein 10 from Homo sapiens (Human).